The chain runs to 648 residues: tRNA 5-methylaminomethyl-2-thiouridine biosynthesis bifunctional protein MnmC (648 aa).

The segment at 1 to 228 (MTDRLVPASL…VDDLLVGEYA (228 aa)) is tRNA (mnm(5)s(2)U34)-methyltransferase. The segment at 252-648 (IGAGLAGCAV…LRARRVGRAG (397 aa)) is FAD-dependent cmnm(5)s(2)U34 oxidoreductase.

The protein in the N-terminal section; belongs to the methyltransferase superfamily. tRNA (mnm(5)s(2)U34)-methyltransferase family. It in the C-terminal section; belongs to the DAO family. It depends on FAD as a cofactor.

It localises to the cytoplasm. It catalyses the reaction 5-aminomethyl-2-thiouridine(34) in tRNA + S-adenosyl-L-methionine = 5-methylaminomethyl-2-thiouridine(34) in tRNA + S-adenosyl-L-homocysteine + H(+). Catalyzes the last two steps in the biosynthesis of 5-methylaminomethyl-2-thiouridine (mnm(5)s(2)U) at the wobble position (U34) in tRNA. Catalyzes the FAD-dependent demodification of cmnm(5)s(2)U34 to nm(5)s(2)U34, followed by the transfer of a methyl group from S-adenosyl-L-methionine to nm(5)s(2)U34, to form mnm(5)s(2)U34. The polypeptide is tRNA 5-methylaminomethyl-2-thiouridine biosynthesis bifunctional protein MnmC (Burkholderia lata (strain ATCC 17760 / DSM 23089 / LMG 22485 / NCIMB 9086 / R18194 / 383)).